A 609-amino-acid polypeptide reads, in one-letter code: DNA mismatch repair protein MutL (609 aa).

Residues 364 to 386 (SVNSKPTDYRPAMSPSFKSTPNT) are disordered.

Belongs to the DNA mismatch repair MutL/HexB family.

Functionally, this protein is involved in the repair of mismatches in DNA. It is required for dam-dependent methyl-directed DNA mismatch repair. May act as a 'molecular matchmaker', a protein that promotes the formation of a stable complex between two or more DNA-binding proteins in an ATP-dependent manner without itself being part of a final effector complex. This chain is DNA mismatch repair protein MutL, found in Rickettsia akari (strain Hartford).